The following is an 859-amino-acid chain: Cadherin-related family member 1 (859 aa).

A signal peptide spans 1–21 (MRRGPRVALVLGLLRIYLAQA). Residues 22–701 (NFAPHFFDNG…LIQTKDNPMK (680 aa)) are Extracellular-facing. Cadherin domains lie at 36-135 (NGNM…APRF), 136-247 (IQEP…APIF), 248-354 (VGTP…PPTF), 360-473 (PQNK…VPKF), 474-577 (TSHY…YPQF), and 569-691 (DVND…MAAF). Asparagine 58 and asparagine 89 each carry an N-linked (GlcNAc...) asparagine glycan. Asparagine 288 carries an N-linked (GlcNAc...) asparagine glycan. Residues 702–722 (AVGVLAGVMAIVVAITVLIST) form a helical membrane-spanning segment. The Cytoplasmic segment spans residues 723–859 (ATFWRNKKSN…KKSLDNKAYI (137 aa)). Residues 793–838 (PALPPPPKMASSMVAQQTVPTVSGSLTPQPSPQLPTPKTLGGPVQS) are disordered. A compositionally biased stretch (polar residues) spans 805–816 (MVAQQTVPTVSG).

Interacts with PROM1. Post-translationally, undergoes proteolytic cleavage; produces a soluble 95 kDa N-terminal fragment and a 25 kDa cell-associated C-terminal fragment. As to expression, expressed in cone and rod photoreceptor cells (at protein level). Expressed in photoreceptor cells of the outer nuclear layer of the retina. Expressed in mitral and tufted cells in the olfactory bulb.

It is found in the cell membrane. In terms of biological role, potential calcium-dependent cell-adhesion protein. May be required for the structural integrity of the outer segment (OS) of photoreceptor cells. In Mus musculus (Mouse), this protein is Cadherin-related family member 1 (Cdhr1).